The following is a 497-amino-acid chain: Serine hydroxymethyltransferase (497 aa).

Residues Leu176 and 180–182 (GHL) each bind (6S)-5,6,7,8-tetrahydrofolate. N6-(pyridoxal phosphate)lysine is present on Lys289.

Belongs to the SHMT family. In terms of assembly, homodimer. Pyridoxal 5'-phosphate serves as cofactor.

It is found in the cytoplasm. It carries out the reaction (6R)-5,10-methylene-5,6,7,8-tetrahydrofolate + glycine + H2O = (6S)-5,6,7,8-tetrahydrofolate + L-serine. It functions in the pathway one-carbon metabolism; tetrahydrofolate interconversion. The protein operates within amino-acid biosynthesis; glycine biosynthesis; glycine from L-serine: step 1/1. Catalyzes the reversible interconversion of serine and glycine with tetrahydrofolate (THF) serving as the one-carbon carrier. This reaction serves as the major source of one-carbon groups required for the biosynthesis of purines, thymidylate, methionine, and other important biomolecules. Also exhibits THF-independent aldolase activity toward beta-hydroxyamino acids, producing glycine and aldehydes, via a retro-aldol mechanism. This is Serine hydroxymethyltransferase from Chlamydia muridarum (strain MoPn / Nigg).